An 886-amino-acid polypeptide reads, in one-letter code: DNA mismatch repair protein MutS (886 aa).

627 to 634 (GPNMGGKS) provides a ligand contact to ATP. The interval 834 to 857 (VECADAPAPSDATHPALDRLRDID) is disordered.

The protein belongs to the DNA mismatch repair MutS family.

Functionally, this protein is involved in the repair of mismatches in DNA. It is possible that it carries out the mismatch recognition step. This protein has a weak ATPase activity. In Burkholderia vietnamiensis (strain G4 / LMG 22486) (Burkholderia cepacia (strain R1808)), this protein is DNA mismatch repair protein MutS.